The sequence spans 200 residues: Recombination protein RecR (200 aa).

The segment at 57–72 (CEHCRTFTEEDICSIC) adopts a C4-type zinc-finger fold. Residues 81 to 176 (RLLCVVEMPA…KVSRIAHGIP (96 aa)) form the Toprim domain.

Belongs to the RecR family.

In terms of biological role, may play a role in DNA repair. It seems to be involved in an RecBC-independent recombinational process of DNA repair. It may act with RecF and RecO. The chain is Recombination protein RecR from Mannheimia succiniciproducens (strain KCTC 0769BP / MBEL55E).